The sequence spans 217 residues: MNQTLLSSFGTSIERVEHALDALREGRGVMVLDDEHRENEGDMIFAAENMTVEQMALTIRHGSGIVCLCINEERRKQLDLPMMVENNTSAFGTGFTVTIEAAHGVTTGVSAADRLTTVRAAIADGAKPSDLHRPGHVFPLRAQAGGVLTRGGHTEATLDLVTLAGFKPAGVLCELTNDDGTMARAPECVTFARLHNMPVVTIEDLVEYRQAHERKAS.

D-ribulose 5-phosphate-binding positions include 37–38, Asp-42, 150–154, and Glu-174; these read RE and RGGHT. Glu-38 serves as a coordination point for Mg(2+). Residue His-153 participates in Mg(2+) binding.

The protein belongs to the DHBP synthase family. Homodimer. Requires Mg(2+) as cofactor. It depends on Mn(2+) as a cofactor.

The enzyme catalyses D-ribulose 5-phosphate = (2S)-2-hydroxy-3-oxobutyl phosphate + formate + H(+). It functions in the pathway cofactor biosynthesis; riboflavin biosynthesis; 2-hydroxy-3-oxobutyl phosphate from D-ribulose 5-phosphate: step 1/1. Functionally, catalyzes the conversion of D-ribulose 5-phosphate to formate and 3,4-dihydroxy-2-butanone 4-phosphate. The sequence is that of 3,4-dihydroxy-2-butanone 4-phosphate synthase from Enterobacter sp. (strain 638).